Here is a 369-residue protein sequence, read N- to C-terminus: P2X receptor B (369 aa).

At 1–25 the chain is on the cytoplasmic side; the sequence is MTIDWDSILSYNTIKVVRIRDRRLG. A helical transmembrane segment spans residues 26–46; the sequence is ILHLCFLIVIVLYVVVYSAII. At 47–369 the chain is on the lumenal side; that stretch reads KKGYVTTEEP…DKLYHNIEAL (323 aa). A pore-forming motif region spans residues 283–296; it reads RHAIRLIFIQTGVI.

This sequence belongs to the P2X receptor family.

The protein localises to the contractile vacuole membrane. P2X receptors are ATP-gated ion channels that play a role in intracellular calcium signaling. Not required for the purinergic response to extracellular nucleotides. Not essential for osmoregulation. Inward currents are evoked by intracellular ATP and ATP analogs. Insensitive to the P2 receptor antagonists PPADS and suramin, and also copper ions. Inhibited by sodium ions. Permeable to chloride ions. This is P2X receptor B (p2xB) from Dictyostelium discoideum (Social amoeba).